The sequence spans 114 residues: Hydrogenase maturation factor HypA (114 aa).

His2 serves as a coordination point for Ni(2+). Positions 73, 76, 89, and 92 each coordinate Zn(2+).

Belongs to the HypA/HybF family.

Its function is as follows. Involved in the maturation of [NiFe] hydrogenases. Required for nickel insertion into the metal center of the hydrogenase. This chain is Hydrogenase maturation factor HypA, found in Caldanaerobacter subterraneus subsp. tengcongensis (strain DSM 15242 / JCM 11007 / NBRC 100824 / MB4) (Thermoanaerobacter tengcongensis).